The sequence spans 157 residues: MKEIVLAGGCFWGVEEYMSRIKGIVETKVGYANGIKENPSYEEVCSGTTGHAEACYIKYDESIISLEELLNKFWSIIDPTVLNKQGNDRGTQYRTGIFYLDQKDLNVIIKSKSQEQKNYRKPIVTEVEPLKCFYEAEEYHQKYLKKNPGGYCHIHLD.

Cys-10 is a catalytic residue.

It belongs to the MsrA Met sulfoxide reductase family.

It catalyses the reaction L-methionyl-[protein] + [thioredoxin]-disulfide + H2O = L-methionyl-(S)-S-oxide-[protein] + [thioredoxin]-dithiol. The catalysed reaction is [thioredoxin]-disulfide + L-methionine + H2O = L-methionine (S)-S-oxide + [thioredoxin]-dithiol. In terms of biological role, has an important function as a repair enzyme for proteins that have been inactivated by oxidation. Catalyzes the reversible oxidation-reduction of methionine sulfoxide in proteins to methionine. This Clostridium botulinum (strain Okra / Type B1) protein is Peptide methionine sulfoxide reductase MsrA.